An 860-amino-acid chain; its full sequence is Endo-1,4-beta-xylanase B (860 aa).

An N-terminal signal peptide occupies residues 1-20 (MKFSSANKILFSGLVASANA). Residues 21–324 (YDLLKDYAGD…KPVYNTLLNI (304 aa)) form the GH10 domain. Glu-144 (proton donor) is an active-site residue. Glu-255 acts as the Nucleophile in catalysis. Cys-278 and Cys-284 are joined by a disulfide. Asn-295, Asn-309, Asn-359, and Asn-374 each carry an N-linked (GlcNAc...) asparagine glycan. Composition is skewed to polar residues over residues 330–362 (RPAS…NKSK) and 371–418 (LPGN…NSKT). Residues 330–793 (RPASSSAKTL…TKTLPGGACK (464 aa)) form a disordered region. Residues 375 to 382 (KSKTLPGG) form repeat 1. Residues 375–782 (KSKTLPGGNS…GGKSKTLPGG (408 aa)) form a 47 X 8 AA tandem repeats of [SKN]-S-K-T-L-P-G-G region. Asn-390 carries N-linked (GlcNAc...) asparagine glycosylation. Copy 2 of the repeat occupies 391–398 (KSKTLPGG). A glycan (N-linked (GlcNAc...) asparagine) is linked at Asn-406. 45 repeat units span residues 415 to 422 (NSKTLPGG), 431 to 438 (NSKTLPGG), 439 to 446 (KSKTLPGG), 447 to 454 (NSKTLPGG), 455 to 462 (KSKTLPGG), 463 to 470 (NSKTLPGG), 471 to 478 (SSKTLPGG), 479 to 486 (KSKTLPGG), 487 to 494 (NSKTLPGG), 495 to 502 (SSKTLPGG), 503 to 510 (KSKTLPGG), 511 to 518 (SSKTLPGG), 519 to 526 (KSKTLPGG), 527 to 534 (NSKTLPGG), 535 to 542 (NSKTLPGG), 543 to 550 (SSKTLPGG), 551 to 558 (KSKTLPGG), 559 to 566 (NSKTLPGG), 567 to 574 (SSKTLPGG), 575 to 582 (KSKTLPGG), 583 to 590 (NSKTLPGG), 591 to 598 (NSKTLPGG), 599 to 606 (KSKTLPGG), 607 to 614 (NSKTLPGG), 615 to 622 (SSKTLPGG), 623 to 630 (KSKTLPGG), 631 to 638 (SSKTLPGG), 639 to 646 (KSKTLPGG), 647 to 654 (NSKTLPGG), 655 to 662 (NSKTLPGG), 663 to 670 (SSKTLPGG), 671 to 678 (KSKTLPGG), 679 to 686 (SSKTLPGG), 687 to 694 (KSKTLPGG), 695 to 702 (NSKTLPGG), 703 to 710 (KSKTLPGG), 711 to 718 (NSKTLPGG), 719 to 726 (KSKTLPGG), 727 to 734 (NSKTLPGG), 735 to 742 (KSKTLPGG), 743 to 750 (NSKTLPGG), 751 to 758 (SSKTLPGG), 759 to 766 (KSKTLPGG), 767 to 774 (NSKTLPGG), and 775 to 782 (KSKTLPGG). Polar residues-rich tracts occupy residues 461-474 (GGNS…SSKT) and 485-498 (GGNS…SSKT). Polar residues-rich tracts occupy residues 525–546 (GGNS…SSKT), 557–570 (GGNS…SSKT), 581–594 (GGNS…NSKT), and 605–618 (GGNS…SSKT). A compositionally biased stretch (polar residues) spans 645 to 666 (GGNSKTLPGGNSKTLPGGSSKT). Residues 741–754 (GGNSKTLPGGSSKT) show a composition bias toward polar residues. In terms of domain architecture, CBM1 spans 824 to 860 (NCAAKWGQCGGNGFNGPTCCQNGSRCQFVNEWYSQCL). N-linked (GlcNAc...) asparagine glycosylation occurs at Asn-845.

The protein belongs to the glycosyl hydrolase 10 (cellulase F) family.

It localises to the secreted. It carries out the reaction Endohydrolysis of (1-&gt;4)-beta-D-xylosidic linkages in xylans.. The protein operates within glycan degradation; xylan degradation. Endo-1,4-beta-xylanase involved in the hydrolysis of xylan, a major structural heterogeneous polysaccharide found in plant biomass representing the second most abundant polysaccharide in the biosphere, after cellulose. Hydrolyzes both unsubstituted (oat spelts) and highly substituted (rye and wheat) forms of arabinoxylanslans. This is Endo-1,4-beta-xylanase B (xynB) from Neocallimastix patriciarum (Rumen fungus).